The chain runs to 274 residues: Tryptase beta-2 (274 aa).

A signal peptide spans 1 to 19; sequence MLKLLLLLALSPLASLVHA. A propeptide spans 20 to 29 (activation peptide); sequence APCPVKQRVG. One can recognise a Peptidase S1 domain in the interval 30 to 271; it reads IVGGREASES…YLDWIHRYVP (242 aa). A disulfide bridge connects residues Cys-58 and Cys-74. Catalysis depends on His-73, which acts as the Charge relay system. Tyr-96 bears the Phosphotyrosine mark. Asn-104 carries an N-linked (GlcNAc...) asparagine glycan. Asp-120 (charge relay system) is an active-site residue. N-linked (GlcNAc...) asparagine glycosylation is present at Asn-131. Cystine bridges form between Cys-154–Cys-229, Cys-187–Cys-210, and Cys-219–Cys-247. Ser-223 serves as the catalytic Charge relay system.

It belongs to the peptidase S1 family. Tryptase subfamily. In terms of assembly, homotetramer. The active tetramer is converted to inactive monomers at neutral and acidic pH in the absence of heparin. Low concentrations of inactive monomers become active monomers at pH 6.0 in the presence of heparin. When the concentration of active monomers is higher, they convert to active monomers and then to active tetramers. These monomers are active and functionally distinct from the tetrameric enzyme. In contrast to the hidden active sites in the tetrameric form, the active site of the monomeric form is accessible for macromolecular proteins and inhibitors, e.g. fibrinogen which is a substrate for the monomeric but not for the tetrameric form. The monomeric form forms a complex with SERPINB6.

It localises to the secreted. The catalysed reaction is Preferential cleavage: Arg-|-Xaa, Lys-|-Xaa, but with more restricted specificity than trypsin.. Tryptase is the major neutral protease present in mast cells and is secreted upon the coupled activation-degranulation response of this cell type. Plays a role in innate immunity. The polypeptide is Tryptase beta-2 (Tpsb2) (Rattus norvegicus (Rat)).